The following is a 151-amino-acid chain: Receptor activity-modifying protein 3 (151 aa).

The first 30 residues, 1-30 (MEATAPRRRHLLPLLLLLLLLCGECPPVSG), serve as a signal peptide directing secretion. Residues 31-116 (CNEKRMLAML…CSVDRQQWQD (86 aa)) are Extracellular-facing. 2 disulfide bridges follow: Cys43–Cys75 and Cys60–Cys107. N-linked (GlcNAc...) asparagine glycans are attached at residues Asn61 and Asn106. Residues 117-141 (PPDEILIPLIVVPILLTLAMTGLVV) traverse the membrane as a helical segment. The Cytoplasmic segment spans residues 142–151 (WRSKRAAQVV).

Belongs to the RAMP family. In terms of assembly, heterodimer of CALCRL and RAMP3; interaction induces allosteric modulation of CALCRL function and ligand specificity for adrenomedullin/ADM and intermedin/ADM2. Heterodimer of CALCR and RAMP3; interaction form the receptor complex AMYR3 for amylin/IAPP. Interacts with GPER1.

The protein localises to the cell membrane. It localises to the membrane. In terms of biological role, accessory protein that interacts with and modulates the function of G-protein coupled receptors including calcitonin gene-related peptide type 1 receptor (CALCRL), calcitonin receptor (CALCR) and G-protein coupled estrogen receptor 1 (GPER1). Required for the transport of CALCRL and GPER1 receptors to the plasma membrane. Plays a role in cardioprotection by reducing cardiac hypertrophy and perivascular fibrosis in a GPER1-dependent manner. Together with CALCRL, form a receptor complex for adrenomedullin/ADM and intermedin/ADM2. Together with CALCR, act as a receptor complex for amylin/IAPP. The protein is Receptor activity-modifying protein 3 (RAMP3) of Sus scrofa (Pig).